Reading from the N-terminus, the 157-residue chain is Protein Smg homolog (157 aa).

This sequence belongs to the Smg family.

The protein is Protein Smg homolog of Idiomarina loihiensis (strain ATCC BAA-735 / DSM 15497 / L2-TR).